The following is a 182-amino-acid chain: NADH-ubiquinone oxidoreductase 20 kDa subunit (182 aa).

4 residues coordinate [4Fe-4S] cluster: C57, C58, C122, and C152.

Belongs to the complex I 20 kDa subunit family. [4Fe-4S] cluster is required as a cofactor.

The protein resides in the mitochondrion. It carries out the reaction a ubiquinone + NADH + 5 H(+)(in) = a ubiquinol + NAD(+) + 4 H(+)(out). The chain is NADH-ubiquinone oxidoreductase 20 kDa subunit (NAD10) from Reclinomonas americana.